Reading from the N-terminus, the 499-residue chain is Trichothecene C-4 hydroxylase (499 aa).

The helical transmembrane segment at 7-29 (VGVAVQLVLTVLLASIPLRVIWN) threads the bilayer. N-linked (GlcNAc...) asparagine glycans are attached at residues N173 and N287. Heme is bound at residue C442. N-linked (GlcNAc...) asparagine glycosylation is present at N473.

Belongs to the cytochrome P450 family. Requires heme as cofactor.

Its subcellular location is the membrane. The protein operates within sesquiterpene biosynthesis; trichothecene biosynthesis. In terms of biological role, trichothecene C-4 hydroxylase; part of the gene cluster that mediates the production of the antimicrobial trichothecene harzianum A (HA) that plays a role in Botrytis cinerea antagonistic activity and plant defense priming. The biosynthesis of harzianum A begins with the cyclization of farnesyl diphosphate to trichodiene and is catalyzed by the trichodiene synthase TRI5. Trichodiene undergoes a series of oxygenations catalyzed by the cytochrome P450 monooxygenase TRI4. TRI4 controls the addition of 3 oxygens at C-2, C-11, and the C-12, C-13-epoxide to form the intermediate isotrichodiol. Isotrichodiol then undergoes a non-enzymatic isomerization and cyclization to form 12,13-epoxytrichothec-9-ene (EPT) which is further converted to trichodermol by the cytochrome P450 monooxygenase TRI11 via C-4 hydroxylation. The last step of HA synthesis is esterification of an octatriendioyl moiety to the C-4 oxygen of trichodermol. The octatriendioyl moiety is probably produced by the polyketide synthase TRI17 and the esterification performed by the trichothecene O-acetyltransferase TRI3. The sequence is that of Trichothecene C-4 hydroxylase from Trichoderma arundinaceum.